The primary structure comprises 99 residues: uncharacterized protein (99 aa).

One can recognise a TM2 domain in the interval 32–79 (KKSVGIAVLLSFIIPGAGQMYLGRVGKGIILLLTCWLIIPWIYSIYDA). Transmembrane regions (helical) follow at residues 34-54 (SVGIAVLLSFIIPGAGQMYLG) and 56-76 (VGKGIILLLTCWLIIPWIYSI).

Its subcellular location is the cell membrane. This is an uncharacterized protein from Methanocaldococcus jannaschii (strain ATCC 43067 / DSM 2661 / JAL-1 / JCM 10045 / NBRC 100440) (Methanococcus jannaschii).